Consider the following 307-residue polypeptide: GTPase Era (307 aa).

The Era-type G domain occupies 17-186 (RCGFVAIVGR…LELIKPYLPE (170 aa)). The tract at residues 25-32 (GRPNVGKS) is G1. 25-32 (GRPNVGKS) is a GTP binding site. The G2 stretch occupies residues 51-55 (QTTRN). A G3 region spans residues 72–75 (DTPG). Residues 72 to 76 (DTPGF) and 133 to 136 (NKID) contribute to the GTP site. Positions 133–136 (NKID) are G4. The G5 stretch occupies residues 165–167 (VSA). The 77-residue stretch at 217-293 (LGEELPYAMN…FLKVWVKVKS (77 aa)) folds into the KH type-2 domain.

The protein belongs to the TRAFAC class TrmE-Era-EngA-EngB-Septin-like GTPase superfamily. Era GTPase family. Monomer.

It is found in the cytoplasm. Its subcellular location is the cell inner membrane. An essential GTPase that binds both GDP and GTP, with rapid nucleotide exchange. Plays a role in 16S rRNA processing and 30S ribosomal subunit biogenesis and possibly also in cell cycle regulation and energy metabolism. This Neisseria meningitidis serogroup B (strain ATCC BAA-335 / MC58) protein is GTPase Era.